Here is a 129-residue protein sequence, read N- to C-terminus: 3-aminoacrylate deaminase RutC (129 aa).

Belongs to the RutC family.

It carries out the reaction (Z)-3-aminoacrylate + H2O + H(+) = 3-oxopropanoate + NH4(+). Functionally, involved in pyrimidine catabolism. Catalyzes the deamination of 3-aminoacrylate to malonic semialdehyde, a reaction that can also occur spontaneously. RutC may facilitate the reaction and modulate the metabolic fitness, rather than catalyzing essential functions. This chain is 3-aminoacrylate deaminase RutC, found in Rhizobium rhizogenes (strain K84 / ATCC BAA-868) (Agrobacterium radiobacter).